The sequence spans 225 residues: Ribonuclease 3 (225 aa).

One can recognise an RNase III domain in the interval 7–129; the sequence is IPRLCRTLGY…IIGAVYLDSD (123 aa). E42 contacts Mg(2+). D46 is a catalytic residue. The Mg(2+) site is built by D115 and E118. E118 is an active-site residue. Positions 155 to 225 constitute a DRBM domain; the sequence is DPKTLLQELL…AAQALELIKR (71 aa).

Belongs to the ribonuclease III family. In terms of assembly, homodimer. Requires Mg(2+) as cofactor.

Its subcellular location is the cytoplasm. It carries out the reaction Endonucleolytic cleavage to 5'-phosphomonoester.. Functionally, digests double-stranded RNA. Involved in the processing of primary rRNA transcript to yield the immediate precursors to the large and small rRNAs (23S and 16S). Processes some mRNAs, and tRNAs when they are encoded in the rRNA operon. Processes pre-crRNA and tracrRNA of type II CRISPR loci if present in the organism. This chain is Ribonuclease 3, found in Shewanella woodyi (strain ATCC 51908 / MS32).